We begin with the raw amino-acid sequence, 137 residues long: Ig heavy chain V region MOPC 315 (137 aa).

An N-terminal signal peptide occupies residues 1 to 18; that stretch reads MKVLSLLYLLTAIPGIMS. A framework-1 region spans residues 19 to 48; the sequence is DVQLQESGPGLVKPSQSLSLTCSVTGYSIT. Cys-40 and Cys-114 are joined by a disulfide. The segment at 49–54 is complementarity-determining-1; it reads SGYFWN. The segment at 55 to 68 is framework-2; the sequence is WIRQFPGNKLEWLG. The interval 69–84 is complementarity-determining-2; it reads FIKYDGSNGYNPSLKN. Positions 85-116 are framework-3; the sequence is RVSITRDTSENQFFLKLNSVTTEDTATYYCAG. A complementarity-determining-3 region spans residues 117–126; sequence DNDHLYYFDY. Residues 127–137 form a framework-4 region; sequence WGQGTTLTVSS.

The protein is Ig heavy chain V region MOPC 315 of Mus musculus (Mouse).